We begin with the raw amino-acid sequence, 310 residues long: Vomeronasal type-1 receptor 97 (310 aa).

The Extracellular segment spans residues 1–19 (MNKDNILHTDTNIKITLFS). Residues 20–40 (EVSIGISANSALFFSHLFMLF) form a helical membrane-spanning segment. Over 41–49 (EKNRSKPID) the chain is Cytoplasmic. A helical transmembrane segment spans residues 50–70 (LYIAFLSLTQLMLLITIGLIA). Over 71-93 (ADMFMSRGRWDSTTCQSLIYLHR) the chain is Extracellular. A disulfide bond links Cys85 and Cys172. The chain crosses the membrane as a helical span at residues 94–114 (LLRGFTLCATCLLNVLWTITL). The Cytoplasmic segment spans residues 115–131 (SPRSSCLTTFKHKSPHH). Residues 132–152 (ISGAFLFFCVLYISFGSHLFL) traverse the membrane as a helical segment. At 153–190 (STIATPNLTSDNFMYVTQSCSFLPMSYSRTSMFSTPMA) the chain is on the extracellular side. N-linked (GlcNAc...) asparagine glycosylation is present at Asn159. Residues 191–211 (IREALLIGLIGLSSGYMVAFL) traverse the membrane as a helical segment. Over 212-238 (WRHKNQARHLHSTSLSSKVSPEQRATR) the chain is Cytoplasmic. A helical transmembrane segment spans residues 239-259 (TIMILMSFFVVLYILENVVFY). The Extracellular segment spans residues 260-269 (SRMTFKDGSM). The helical transmembrane segment at 270-290 (FYCVQIIVSHSYATISPFVFI) threads the bilayer. The Cytoplasmic segment spans residues 291 to 310 (CTEKRIIKLWGSMSSRIVSI).

The protein belongs to the G-protein coupled receptor 1 family. In terms of tissue distribution, expressed in 1-4% of neurons of the vomeronasal organ. Only one pheromone receptor gene may be expressed in a particular neuron. Not expressed in the main olfactory epithelium.

The protein resides in the cell membrane. Functionally, putative pheromone receptor implicated in the regulation of social as well as reproductive behavior. The polypeptide is Vomeronasal type-1 receptor 97 (Vom1r97) (Rattus norvegicus (Rat)).